Reading from the N-terminus, the 321-residue chain is MRRIYPHRHLLGIEGLSRPEIVALLDAAESLFDVSRRSVRKVPTLRGKTVVNLFYEPSTRTRTSFELAGKRLSADVINISVSTSSAVKGESLLDTVQNLQAMQPDVLVIRHAASGAPHHVAAHTRAAVVNAGDGTHEHPTQALLDAFTIRRAKGRLEGLEVAICGDIVHSRVARSNAHLLTTMGARVRFAGPRTLLPIAGESLGATVYDRIEPALEGADVVMMLRVQRERLSGSFLPSTREYSRTFGLNPARLALAKPDAIVMHPGPMNRGVEIDPRVADGAQSVILDQVEAGVAVRMAVLWILAAEANEFSATGEPRPAP.

Carbamoyl phosphate is bound by residues arginine 60 and threonine 61. Position 88 (lysine 88) interacts with L-aspartate. Positions 110, 138, and 141 each coordinate carbamoyl phosphate. 2 residues coordinate L-aspartate: arginine 171 and arginine 225. Glycine 266 and proline 267 together coordinate carbamoyl phosphate.

This sequence belongs to the aspartate/ornithine carbamoyltransferase superfamily. ATCase family. Heterododecamer (2C3:3R2) of six catalytic PyrB chains organized as two trimers (C3), and six regulatory PyrI chains organized as three dimers (R2).

It carries out the reaction carbamoyl phosphate + L-aspartate = N-carbamoyl-L-aspartate + phosphate + H(+). Its pathway is pyrimidine metabolism; UMP biosynthesis via de novo pathway; (S)-dihydroorotate from bicarbonate: step 2/3. Functionally, catalyzes the condensation of carbamoyl phosphate and aspartate to form carbamoyl aspartate and inorganic phosphate, the committed step in the de novo pyrimidine nucleotide biosynthesis pathway. This chain is Aspartate carbamoyltransferase catalytic subunit, found in Sorangium cellulosum (strain So ce56) (Polyangium cellulosum (strain So ce56)).